The following is a 1236-amino-acid chain: Calcium-activated potassium channel subunit alpha-1 (1236 aa).

The segment covering 1-21 (MANGGGGGGGSSGGGGGGGGS) has biased composition (gly residues). Residues 1 to 61 (MANGGGGGGG…SSSSSSSSSV (61 aa)) are disordered. Residues 1-86 (MANGGGGGGG…VPCDSRGQRM (86 aa)) lie on the Extracellular side of the membrane. Residues 39 to 60 (SSSSSSSSSSSSSSSSSSSSSS) are compositionally biased toward low complexity. The chain crosses the membrane as a helical span at residues 87 to 107 (WWAFLASSMVTFFGGLFIILL). Topologically, residues 108-178 (WRTLKYLWTV…MISAQTLTGR (71 aa)) are cytoplasmic. S-palmitoyl cysteine attachment occurs at residues Cys118, Cys119, and Cys121. The chain crosses the membrane as a helical span at residues 179 to 199 (VLVVLVFALSIGALVIYFIDS). Residues 200 to 214 (SNPIESCQNFYKDFT) lie on the Extracellular side of the membrane. A helical membrane pass occupies residues 215–235 (LQIDMAFNVFFLLYFGLRFIA). The Cytoplasmic portion of the chain corresponds to 236 to 239 (ANDK). The chain crosses the membrane as a helical span at residues 240 to 260 (LWFWLEVNSVVDFFTVPPVFV). Residues 261-264 (SVYL) lie on the Extracellular side of the membrane. Residues 265–285 (NRSWLGLRFLRALRLIQFSEI) form a helical membrane-spanning segment. At 286 to 300 (LQFLNILKTSNSIKL) the chain is on the cytoplasmic side. Residues 301 to 321 (VNLLSIFISTWLTAAGFIHLV) form a helical membrane-spanning segment. Topologically, residues 322-335 (ENSGDPWENFQNNQ) are extracellular. The pore-forming intramembrane region spans 336–358 (ALTYWECVYLLMVTMSTVGYGDV). Residues 352–355 (TVGY) carry the Selectivity for potassium motif. Topologically, residues 359–367 (YAKTTLGRL) are extracellular. Residues 368–388 (FMVFFILGGLAMFASYVPEII) traverse the membrane as a helical segment. Residues 389–1236 (ELIGNRKKYG…KQKYVQEERL (848 aa)) lie on the Cytoplasmic side of the membrane. Positions 407–549 (RKHIVVCGHI…WNWKEGDDAI (143 aa)) constitute an RCK N-terminal 1 domain. Residues Glu439, Gln462, and Glu464 each contribute to the Mg(2+) site. The tract at residues 556–576 (LGFIAQSCLAQGLSTMLANLF) is segment S7. The segment S8 stretch occupies residues 613–633 (LSFPTVCELCFVKLKLLMIAI). Residues 677 to 681 (CKACH) are heme-binding motif. The interval 757–787 (EDEQPSTLSPKKKQRNGGMRNSPNTSPKLMR) is disordered. The residue at position 763 (Thr763) is a Phosphothreonine. Phosphoserine occurs at positions 765, 778, and 782. The segment at 837–857 (VLSGHVVVCIFGDVSSALIGL) is segment S9. In terms of domain architecture, RCK N-terminal 2 spans 839–983 (SGHVVVCIFG…MDRSSPDNSP (145 aa)). Phosphothreonine is present on Thr970. Phosphoserine occurs at positions 978 and 982. The Calcium bowl motif lies at 1003–1025 (TELVNDTNVQFLDQDDDDDPDTE). Ca(2+) is bound by residues Gln1012, Asp1015, Asp1018, and Asp1020. The segment S10 stretch occupies residues 1032-1052 (FACGTAFAVSVLDSLMSATYF). Residues 1186-1211 (RASLSHSSHSSQSSSKKSSSVHSIPS) are compositionally biased toward low complexity. The disordered stretch occupies residues 1186–1236 (RASLSHSSHSSQSSSKKSSSVHSIPSTANRQNRPKSRESRDKQKYVQEERL). Positions 1220-1236 (KSRESRDKQKYVQEERL) are enriched in basic and acidic residues. Phosphoserine is present on residues Ser1221 and Ser1224.

It belongs to the potassium channel family. Calcium-activated (TC 1.A.1.3) subfamily. KCa1.1/KCNMA1 sub-subfamily. In terms of assembly, homotetramer; which constitutes the calcium-activated potassium channel. Interacts with RAB11B. Interacts with beta subunits KCNMB1, KCNMB2, KCNMB3 and KCNMB4. Interacts with gamma subunits LRRC26, LRRC38, LRRC52 and LRRC55. Beta and gamma subunits are accessory, and modulate its activity. In terms of processing, phosphorylated. Phosphorylation by kinases such as PKA and/or PKG. In smooth muscles, phosphorylation affects its activity. Post-translationally, palmitoylation by ZDHHC22 and ZDHHC23 within the intracellular linker between the S0 and S1 transmembrane domains regulates localization to the plasma membrane. Depalmitoylated by LYPLA1 and LYPLAL1, leading to retard exit from the trans-Golgi network. As to expression, widely expressed. Except in myocytes, it is almost ubiquitously expressed.

It localises to the cell membrane. The catalysed reaction is K(+)(in) = K(+)(out). Ethanol and carbon monoxide-bound heme increase channel activation. Heme inhibits channel activation. Potassium channel activated by both membrane depolarization or increase in cytosolic Ca(2+) that mediates export of K(+). It is also activated by the concentration of cytosolic Mg(2+). Its activation dampens the excitatory events that elevate the cytosolic Ca(2+) concentration and/or depolarize the cell membrane. It therefore contributes to repolarization of the membrane potential. Plays a key role in controlling excitability in a number of systems, such as regulation of the contraction of smooth muscle, the tuning of hair cells in the cochlea, regulation of transmitter release, and innate immunity. In smooth muscles, its activation by high level of Ca(2+), caused by ryanodine receptors in the sarcoplasmic reticulum, regulates the membrane potential. In cochlea cells, its number and kinetic properties partly determine the characteristic frequency of each hair cell and thereby helps to establish a tonotopic map. Kinetics of KCNMA1 channels are determined by alternative splicing, phosphorylation status and its combination with modulating beta subunits. Highly sensitive to both iberiotoxin (IbTx) and charybdotoxin (CTX). Possibly induces sleep when activated by melatonin and through melatonin receptor MTNR1A-dependent dissociation of G-beta and G-gamma subunits, leading to increased sensitivity to Ca(2+) and reduced synaptic transmission. Its function is as follows. Potassium channel activated by both membrane depolarization or increase in cytosolic Ca(2+) that mediates export of K(+). The protein is Calcium-activated potassium channel subunit alpha-1 of Homo sapiens (Human).